A 1078-amino-acid polypeptide reads, in one-letter code: Zinc finger protein 827 (1078 aa).

Positions 1-10 are enriched in basic and acidic residues; it reads MPRRKQEQPK. The tract at residues 1–14 is mediates direct interaction with RBBP4; sequence MPRRKQEQPKRLPS. Residues 1–76 form a disordered region; that stretch reads MPRRKQEQPK…PDTSLGSATP (76 aa). Positions 3–5 match the RRK motif; mediates NuRD recruitment to telomeres motif; the sequence is RRK. Composition is skewed to polar residues over residues 33–42 and 62–76; these read YGNSSETPSE and EQST…SATP. Residues K175, K215, and K225 each participate in a glycyl lysine isopeptide (Lys-Gly) (interchain with G-Cter in SUMO2) cross-link. The tract at residues 307–341 is disordered; it reads SLLPDDPLPLPSSEKKPEKVTPPPPPPPPTAQPPQ. Residues 326–338 are compositionally biased toward pro residues; it reads VTPPPPPPPPTAQ. Glycyl lysine isopeptide (Lys-Gly) (interchain with G-Cter in SUMO2) cross-links involve residues K357 and K369. C2H2-type zinc fingers lie at residues 371-393, 399-421, and 430-452; these read FQCP…MVIH, HQCP…MKVH, and FQCQ…MRCH. Glycyl lysine isopeptide (Lys-Gly) (interchain with G-Cter in SUMO2) cross-links involve residues K463, K472, K520, K546, K577, K584, and K594. Residues 466–490 are disordered; that stretch reads IPDPDVKGSPHLSDSGCLGQQREGG. The tract at residues 594–640 is disordered; sequence KEEPKEEESLSMPLPRSSYVFSPEPEVSTPSVSEDPLTPQEGKGSVL. The span at 613–627 shows a compositional bias: low complexity; the sequence is VFSPEPEVSTPSVSE. Residues K636 and K655 each participate in a glycyl lysine isopeptide (Lys-Gly) (interchain with G-Cter in SUMO2) cross-link. K670 participates in a covalent cross-link: Glycyl lysine isopeptide (Lys-Gly) (interchain with G-Cter in SUMO1); alternate. Residue K670 forms a Glycyl lysine isopeptide (Lys-Gly) (interchain with G-Cter in SUMO2); alternate linkage. Residues K701, K707, K739, K775, and K795 each participate in a glycyl lysine isopeptide (Lys-Gly) (interchain with G-Cter in SUMO2) cross-link. C2H2-type zinc fingers lie at residues 814-836 and 842-864; these read FPCD…LSLH and YKCH…LTVH. Residues K867 and K888 each participate in a glycyl lysine isopeptide (Lys-Gly) (interchain with G-Cter in SUMO2) cross-link. 2 consecutive C2H2-type zinc fingers follow at residues 894 to 916 and 926 to 949; these read YSCH…MSLH and ICCT…GTKH. The span at 945–957 shows a compositional bias: basic and acidic residues; it reads IGTKHTGDDRKTP. The disordered stretch occupies residues 945 to 990; it reads IGTKHTGDDRKTPSESNSPSSSSLSTLSDSANGKDDSDSSQKNKGG. A Glycyl lysine isopeptide (Lys-Gly) (interchain with G-Cter in SUMO2) cross-link involves residue K955. Residues 958-974 show a composition bias toward low complexity; that stretch reads SESNSPSSSSLSTLSDS. A compositionally biased stretch (basic and acidic residues) spans 976 to 985; it reads NGKDDSDSSQ. K1011 is covalently cross-linked (Glycyl lysine isopeptide (Lys-Gly) (interchain with G-Cter in SUMO2)). C2H2-type zinc fingers lie at residues 1016–1038 and 1044–1066; these read FECV…LQIH and FECD…KKCH.

This sequence belongs to the krueppel C2H2-type zinc-finger protein family. As to quaternary structure, part of a transcription inhibitory ribonucleoprotein complex composed at least of the circular RNA circZNF827, HNRNPK and HNRNPL. Interacts with the nucleosome remodeling and histone deacetylase/NuRD complex. Interacts with RBBP4; the interaction is direct and recruits RBBP4, a component of the NuRD complex, to telomeres.

The protein localises to the nucleus. It is found in the chromosome. Its subcellular location is the telomere. Its function is as follows. As part of a ribonucleoprotein complex composed at least of HNRNPK, HNRNPL and the circular RNA circZNF827 that nucleates the complex on chromatin, may negatively regulate the transcription of genes involved in neuronal differentiation. Could also recruit the nucleosome remodeling and histone deacetylase/NuRD complex to telomeric regions of chromosomes to regulate chromatin remodeling as part of telomere maintenance. The sequence is that of Zinc finger protein 827 (Znf827) from Mus musculus (Mouse).